The following is a 100-amino-acid chain: Urease subunit gamma (100 aa).

Belongs to the urease gamma subunit family. Heterotrimer of UreA (gamma), UreB (beta) and UreC (alpha) subunits. Three heterotrimers associate to form the active enzyme.

It localises to the cytoplasm. The enzyme catalyses urea + 2 H2O + H(+) = hydrogencarbonate + 2 NH4(+). The protein operates within nitrogen metabolism; urea degradation; CO(2) and NH(3) from urea (urease route): step 1/1. The polypeptide is Urease subunit gamma (Burkholderia ambifaria (strain MC40-6)).